A 477-amino-acid chain; its full sequence is Salivary plasminogen activator alpha 2 (477 aa).

Positions 1–36 (MVNTMKTKLLCVLLLCGAVFSLPRQETYRQLARGSR) are cleaved as a signal peptide. The Fibronectin type-I domain occupies 40–82 (VACRDEKTQMIYQQQESWLRPEVRSKRVEHCRCDRGLAQCHTV). Disulfide bonds link cysteine 42/cysteine 72, cysteine 70/cysteine 79, cysteine 87/cysteine 98, cysteine 92/cysteine 109, cysteine 111/cysteine 120, cysteine 128/cysteine 209, cysteine 149/cysteine 191, cysteine 180/cysteine 204, cysteine 214/cysteine 345, cysteine 257/cysteine 273, cysteine 265/cysteine 334, cysteine 359/cysteine 434, cysteine 391/cysteine 407, and cysteine 424/cysteine 452. One can recognise an EGF-like domain in the interval 83–121 (PVKSCSELRCFNGGTCWQAASFSDFVCQCPKGYTGKQCE). The Kringle domain occupies 128–209 (CYKDQGVTYR…ILEFCSVPVC (82 aa)). Asparagine 185 carries N-linked (GlcNAc...) asparagine glycosylation. A Peptidase S1 domain is found at 226–476 (STGGLFTDIT…YLGWIRDNMR (251 aa)). Active-site charge relay system residues include histidine 272 and aspartate 321. N-linked (GlcNAc...) asparagine glycosylation is present at asparagine 398. Serine 428 (charge relay system) is an active-site residue.

Belongs to the peptidase S1 family. Monomer.

The protein localises to the secreted. The enzyme catalyses Specific cleavage of Arg-|-Val bond in plasminogen to form plasmin.. With respect to regulation, activity toward plasminogen is stimulated in the presence of fibrin I. In terms of biological role, probably essential to support the feeding habits of this exclusively haematophagous animal. Probable potent thrombolytic agent. In Desmodus rotundus (Vampire bat), this protein is Salivary plasminogen activator alpha 2.